Reading from the N-terminus, the 194-residue chain is Putative 3-methyladenine DNA glycosylase (194 aa).

The protein belongs to the DNA glycosylase MPG family.

In Synechococcus elongatus (strain ATCC 33912 / PCC 7942 / FACHB-805) (Anacystis nidulans R2), this protein is Putative 3-methyladenine DNA glycosylase.